The sequence spans 151 residues: UPF0178 protein Spea_2958 (151 aa).

This sequence belongs to the UPF0178 family.

This is UPF0178 protein Spea_2958 from Shewanella pealeana (strain ATCC 700345 / ANG-SQ1).